The sequence spans 189 residues: Hypoxanthine/guanine phosphoribosyltransferase (189 aa).

Belongs to the purine/pyrimidine phosphoribosyltransferase family. Archaeal HPRT subfamily. In terms of assembly, homodimer.

It is found in the cytoplasm. It catalyses the reaction IMP + diphosphate = hypoxanthine + 5-phospho-alpha-D-ribose 1-diphosphate. It carries out the reaction GMP + diphosphate = guanine + 5-phospho-alpha-D-ribose 1-diphosphate. The protein operates within purine metabolism; IMP biosynthesis via salvage pathway; IMP from hypoxanthine: step 1/1. In terms of biological role, catalyzes a salvage reaction resulting in the formation of IMP that is energically less costly than de novo synthesis. The chain is Hypoxanthine/guanine phosphoribosyltransferase from Methanosarcina mazei (strain ATCC BAA-159 / DSM 3647 / Goe1 / Go1 / JCM 11833 / OCM 88) (Methanosarcina frisia).